Consider the following 404-residue polypeptide: tRNA pseudouridine(31) synthase (404 aa).

Residue D168 is part of the active site.

This sequence belongs to the pseudouridine synthase RluA family.

The protein resides in the cytoplasm. Its subcellular location is the mitochondrion. The catalysed reaction is uridine(31) in tRNA = pseudouridine(31) in tRNA. Catalyzes the formation of pseudouridine at position 31 in the psi GC loop of tRNAS. The chain is tRNA pseudouridine(31) synthase (PUS6) from Saccharomyces cerevisiae (strain ATCC 204508 / S288c) (Baker's yeast).